Reading from the N-terminus, the 417-residue chain is Gamma-glutamyl phosphate reductase (417 aa).

The protein belongs to the gamma-glutamyl phosphate reductase family.

The protein resides in the cytoplasm. It carries out the reaction L-glutamate 5-semialdehyde + phosphate + NADP(+) = L-glutamyl 5-phosphate + NADPH + H(+). Its pathway is amino-acid biosynthesis; L-proline biosynthesis; L-glutamate 5-semialdehyde from L-glutamate: step 2/2. Its function is as follows. Catalyzes the NADPH-dependent reduction of L-glutamate 5-phosphate into L-glutamate 5-semialdehyde and phosphate. The product spontaneously undergoes cyclization to form 1-pyrroline-5-carboxylate. This chain is Gamma-glutamyl phosphate reductase, found in Escherichia fergusonii (strain ATCC 35469 / DSM 13698 / CCUG 18766 / IAM 14443 / JCM 21226 / LMG 7866 / NBRC 102419 / NCTC 12128 / CDC 0568-73).